The sequence spans 63 residues: Cytochrome c oxidase subunit 5C-1 (63 aa).

The chain crosses the membrane as a helical span at residues 15-34 (SEVKELIIGSVLGLAAGGLW).

It belongs to the cytochrome c oxidase subunit 5C family.

The protein resides in the mitochondrion inner membrane. Its function is as follows. This protein is one of the nuclear-coded polypeptide chains of cytochrome c oxidase, the terminal oxidase in mitochondrial electron transport. This Helianthus annuus (Common sunflower) protein is Cytochrome c oxidase subunit 5C-1 (COX5C1).